The chain runs to 267 residues: Cyclin-C (267 aa).

Residues 48–151 (IQVLGEQLKL…LLENLDCCLI (104 aa)) form the Cyclin N-terminal domain.

Belongs to the cyclin family. Cyclin C subfamily. Component of the Cdk8 module of the Mediator complex, composed of CycC, Cdk8, kto and skd.

The protein resides in the nucleus. Its function is as follows. Component of the Mediator complex, a coactivator involved in regulated gene transcription of nearly all RNA polymerase II-dependent genes. Mediator functions as a bridge to convey information from gene-specific regulatory proteins to the basal RNA polymerase II transcription machinery. Mediator is recruited to promoters by direct interactions with regulatory proteins and serves as a scaffold for the assembly of a functional preinitiation complex with RNA polymerase II and the general transcription factors. Binds to and activates cyclin-dependent kinase Cdk8 that phosphorylates the CTD (C-terminal domain) of the large subunit of RNA polymerase II (RNAp II), which may inhibit the formation of a transcription initiation complex. Required for leg and eye development and macrochaete specification or differentiation. In Drosophila melanogaster (Fruit fly), this protein is Cyclin-C (CycC).